A 334-amino-acid chain; its full sequence is Cytoskeleton protein RodZ (334 aa).

At 1–111 the chain is on the cytoplasmic side; the sequence is MNTEATHDQN…LGKRRKKRDG (111 aa). Residues 19-71 enclose the HTH cro/C1-type domain; that stretch reads LRNAREQLGLSQQAVAERLCLKVSTVRDIEEDKAPSDLASTFLRGYIRSYARL. A DNA-binding region (H-T-H motif) is located at residues 30 to 49; it reads QQAVAERLCLKVSTVRDIEE. Residues 112-132 traverse the membrane as a helical; Signal-anchor for type II membrane protein segment; it reads WLMSFTWLVLFVVVGLTGAWW. At 133–334 the chain is on the periplasmic side; that stretch reads WQNHKAHQEE…TLNAEPTPAQ (202 aa). The segment at 152 to 210 is disordered; sequence AGLNADKDSGQSVPLDTGAVTSQDTTPAQTAPAPATPVDSTAATQTPAPTAAATQNTVV. The span at 161 to 175 shows a compositional bias: polar residues; the sequence is GQSVPLDTGAVTSQD. The span at 176–210 shows a compositional bias: low complexity; it reads TTPAQTAPAPATPVDSTAATQTPAPTAAATQNTVV.

The protein belongs to the RodZ family.

It localises to the cell inner membrane. Cytoskeletal protein that is involved in cell-shape control through regulation of the length of the long axis. The sequence is that of Cytoskeleton protein RodZ from Salmonella gallinarum (strain 287/91 / NCTC 13346).